The chain runs to 398 residues: Cystathionine gamma-lyase (398 aa).

Substrate contacts are provided by arginine 61, tyrosine 113, and arginine 118. Lysine 211 is modified (N6-(pyridoxal phosphate)lysine). Substrate is bound at residue glutamate 338.

The protein belongs to the trans-sulfuration enzymes family. In terms of assembly, homotetramer. Interacts with CALM in a calcium-dependent manner. Requires pyridoxal 5'-phosphate as cofactor. As to expression, detected in liver and kidney, and at lower levels in small intestine (at protein level). Highly expressed in liver, kidney and lung, detected at lower levels in stomach, small intestine and adipose tissue, and hardly found in heart, bone, and thymus.

It is found in the cytoplasm. The catalysed reaction is L,L-cystathionine + H2O = 2-oxobutanoate + L-cysteine + NH4(+). It carries out the reaction L-cysteine + H2O = hydrogen sulfide + pyruvate + NH4(+) + H(+). The enzyme catalyses L-homocysteine + H2O = 2-oxobutanoate + hydrogen sulfide + NH4(+) + H(+). It catalyses the reaction L-homoserine = 2-oxobutanoate + NH4(+). The catalysed reaction is L-selenocystathionine + H2O = L-selenocysteine + 2-oxobutanoate + NH4(+). It functions in the pathway amino-acid biosynthesis; L-cysteine biosynthesis; L-cysteine from L-homocysteine and L-serine: step 2/2. With respect to regulation, activated by calmodulin in the presence of calcium ions. Its function is as follows. Catalyzes the last step in the trans-sulfuration pathway from L-methionine to L-cysteine in a pyridoxal-5'-phosphate (PLP)-dependent manner, which consists on cleaving the L,L-cystathionine molecule into L-cysteine, ammonia and 2-oxobutanoate. Part of the L-cysteine derived from the trans-sulfuration pathway is utilized for biosynthesis of the ubiquitous antioxidant glutathione. Besides its role in the conversion of L-cystathionine into L-cysteine, it utilizes L-cysteine and L-homocysteine as substrates (at much lower rates than L,L-cystathionine) to produce hydrogen sulfide (H2S). In vitro, it converts two L-cysteine molecules into lanthionine and H2S, and two L-homocysteine molecules to homolanthionine and H2S, which can be particularly relevant under conditions of severe hyperhomocysteinemia. Lanthionine and homolanthionine are structural homologs of L,L-cystathionine that differ by the absence or presence of an extra methylene group, respectively. Acts as a cysteine-protein sulfhydrase by mediating sulfhydration of target proteins: sulfhydration consists of converting -SH groups into -SSH on specific cysteine residues of target proteins such as GAPDH, PTPN1 and NF-kappa-B subunit RELA, thereby regulating their function. By generating the gasotransmitter H2S, it participates in a number of physiological processes such as vasodilation, bone protection, and inflammation. Plays an essential role in myogenesis by contributing to the biogenesis of H2S in skeletal muscle tissue. Can also accept homoserine as substrate. Catalyzes the elimination of selenocystathionine (which can be derived from the diet) to yield selenocysteine, ammonia and 2-oxobutanoate. This chain is Cystathionine gamma-lyase (Cth), found in Mus musculus (Mouse).